A 715-amino-acid chain; its full sequence is Tensin-4 (715 aa).

The signal sequence occupies residues 1-18; that stretch reads MSQVMSSPLLAGGHAVSL. Serine 82 carries the phosphoserine modification. Disordered stretches follow at residues 159–183, 195–251, 291–364, and 376–435; these read RCHDGPQHCSSPSVTPPFGSLRSGG, RSSS…SPLV, SLLH…CPPS, and LING…ARDM. Residues 197–206 show a composition bias toward polar residues; it reads SSESLIFSGN. Serine 248 carries the phosphoserine modification. A compositionally biased stretch (low complexity) spans 291-325; the sequence is SLLHSSNSSHQSSSRSLESPANSSSSLHSLGSVSL. The region spanning 449-556 is the SH2 domain; the sequence is WFKPNITREQ…ALPCKLTIPQ (108 aa). The 124-residue stretch at 582 to 705 folds into the PTB domain; that stretch reads CHTLYLSSVS…QPASQVIGLV (124 aa).

This sequence belongs to the PTEN phosphatase protein family. In terms of assembly, interacts (via SH2 domain) with Rho GTPase-activating protein DLC1 (via C-terminus); the interaction is independent of DLC1 tyrosine phosphorylation. Interacts with integrin ITGB1; the interaction displaces tensin TNS3 from the ITGB1 cytoplasmic tail and promotes ITGB1 stability. Interacts (via SH2 domain) with E3 ubiquitin-protein ligase CBL (phosphorylated on 'Tyr-774'); the interaction is enhanced in the presence of EGF and reduces interaction of CBL with EGFR. Interacts (via SH2 domain) with receptor tyrosine kinase MET (when phosphorylated); the interaction increases MET protein stability. Proteolytically cleaved by caspase-3 during apoptosis. In terms of tissue distribution, expressed at low levels in colon (at protein level). Expressed in prostate and placenta.

The protein localises to the cell junction. The protein resides in the focal adhesion. It localises to the cytoplasm. It is found in the cytoskeleton. In terms of biological role, promotes EGF-induced cell migration by displacing tensin TNS3 from the cytoplasmic tail of integrin ITGB1 which results in dissociation of TNS3 from focal adhesions, disassembly of actin stress fibers and initiation of cell migration. Suppresses ligand-induced degradation of EGFR by reducing EGFR ubiquitination in the presence of EGF. Increases MET protein stability by inhibiting MET endocytosis and subsequent lysosomal degradation which leads to increased cell survival, proliferation and migration. The protein is Tensin-4 (TNS4) of Homo sapiens (Human).